A 238-amino-acid polypeptide reads, in one-letter code: Zinc finger protein ZAT6 (238 aa).

Residues 1–15 show a composition bias toward polar residues; sequence MALETLTSPRLSSPM. Positions 1–42 are disordered; sequence MALETLTSPRLSSPMPTLFQDSALGFHGSKGKRSKRSRSEFD. The short motif at 30–38 is the Nuclear localization signal element; it reads KGKRSKRSR. 2 C2H2-type zinc fingers span residues 89 to 111 and 148 to 170; these read YKCS…KASH and HVCS…KRCH. Residues 175 to 202 are disordered; that stretch reads NGGGVSSSVSNSEDVGSTSHVSSGHRGF. Low complexity predominate over residues 180 to 193; the sequence is SSSVSNSEDVGSTS.

The protein resides in the nucleus. Its function is as follows. Probable transcription factor that regulates root development and phosphate (Pi) acquisition and homeostasis. Probably acts as a repressor of primary root growth and regulates Pi homeostasis through the control of root architecture. The polypeptide is Zinc finger protein ZAT6 (ZAT6) (Arabidopsis thaliana (Mouse-ear cress)).